We begin with the raw amino-acid sequence, 686 residues long: Translation initiation factor IF-2 (686 aa).

The segment at 54–105 (KPSVADEFEVEEKVVRSKKNSNKKKKKGKGNEDKRQENFAGRQQTQTVETPD) is disordered. Basic residues predominate over residues 69-81 (RSKKNSNKKKKKG). Positions 188-357 (ERPAVVTIMG…LLVSEVEEYK (170 aa)) constitute a tr-type G domain. The G1 stretch occupies residues 197-204 (GHVDHGKT). 197 to 204 (GHVDHGKT) lines the GTP pocket. The segment at 222-226 (GITQH) is G2. A G3 region spans residues 243 to 246 (DTPG). Residues 243–247 (DTPGH) and 297–300 (NKMD) each bind GTP. Positions 297–300 (NKMD) are G4. A G5 region spans residues 333 to 335 (SAI).

Belongs to the TRAFAC class translation factor GTPase superfamily. Classic translation factor GTPase family. IF-2 subfamily.

It localises to the cytoplasm. Functionally, one of the essential components for the initiation of protein synthesis. Protects formylmethionyl-tRNA from spontaneous hydrolysis and promotes its binding to the 30S ribosomal subunits. Also involved in the hydrolysis of GTP during the formation of the 70S ribosomal complex. This chain is Translation initiation factor IF-2, found in Bacillus cereus (strain AH187).